The chain runs to 375 residues: Mitogen-activated protein kinase 4a (375 aa).

Residues 39-325 (KPPLRPIGRG…VEAALAHPYL (287 aa)) enclose the Protein kinase domain. Residues 45-53 (IGRGAYGIV) and lysine 68 each bind ATP. The Proton acceptor role is filled by aspartate 165. Threonine 197 carries the post-translational modification Phosphothreonine. The TXY motif lies at 197-199 (TEY). Tyrosine 199 carries the post-translational modification Phosphotyrosine.

It belongs to the protein kinase superfamily. CMGC Ser/Thr protein kinase family. MAP kinase subfamily. The cofactor is Mg(2+). In terms of processing, dually phosphorylated on Thr-197 and Tyr-199, which activates the enzyme. Phosphorylated in response to pathogen-associated molecular pattern (PAMP) chitin and in response to necrotrophic fungus B.cinerea spores. Not phosphorylated in response to osmotic stress. Expressed strongly in the apical cells of caulonemal air filaments and rhizoids in fully developed plants and less strongly, but readily detectable in filamentous protonemal tissue at the edge of the plant consisting of both chloronema and caulonema. When filamentous growth of protonema is promoted, the expression is strongest in newly formed apical tip cells of protonemal tissue.

The protein resides in the cytoplasm. The protein localises to the nucleus. The catalysed reaction is L-seryl-[protein] + ATP = O-phospho-L-seryl-[protein] + ADP + H(+). It catalyses the reaction L-threonyl-[protein] + ATP = O-phospho-L-threonyl-[protein] + ADP + H(+). Activated by threonine and tyrosine phosphorylation. Activated in response to bacterial and fungal pathogen-associated molecular patterns (PAMPs) including chitin, chitosan and peptidyl glycans (PGNs). Activation in response to chitin requires the CERK1, MEKK1a/b, MKK1a/b/c and MPK4a/b signaling pathway. Activated in response to necrotrophic fungus B.cinerea spores. Not activated in response to osmotic stress. The CERK1, MEKK1a/b, MKK1a/b/c and MPK4a/b proteins are involved in pathogen defense. The pathway induces rapid growth inhibition, cell wall depositions and accumulation of defense-related transcripts. This protein is required for innate immunity triggered by pathogen-associated molecular patterns (PAMPs). Involved in resistance to necrotrophic fungi B.cinerea and A.brassicicola. Involved in the transduction of signals from chitosan perception to the activation of defense genes. This Physcomitrium patens (Spreading-leaved earth moss) protein is Mitogen-activated protein kinase 4a (MPK4a).